The following is a 212-amino-acid chain: Pyridoxine/pyridoxamine 5'-phosphate oxidase (212 aa).

Residues 8–11 (RREY) and K66 each bind substrate. Residues 61–66 (RIVLLK), 76–77 (FT), R82, K83, and Q105 each bind FMN. Y123, R127, and S131 together coordinate substrate. FMN-binding positions include 140-141 (QS) and W185. 191-193 (RLH) is a substrate binding site. R195 contributes to the FMN binding site.

It belongs to the pyridoxamine 5'-phosphate oxidase family. As to quaternary structure, homodimer. It depends on FMN as a cofactor.

It catalyses the reaction pyridoxamine 5'-phosphate + O2 + H2O = pyridoxal 5'-phosphate + H2O2 + NH4(+). It carries out the reaction pyridoxine 5'-phosphate + O2 = pyridoxal 5'-phosphate + H2O2. Its pathway is cofactor metabolism; pyridoxal 5'-phosphate salvage; pyridoxal 5'-phosphate from pyridoxamine 5'-phosphate: step 1/1. The protein operates within cofactor metabolism; pyridoxal 5'-phosphate salvage; pyridoxal 5'-phosphate from pyridoxine 5'-phosphate: step 1/1. Its function is as follows. Catalyzes the oxidation of either pyridoxine 5'-phosphate (PNP) or pyridoxamine 5'-phosphate (PMP) into pyridoxal 5'-phosphate (PLP). This chain is Pyridoxine/pyridoxamine 5'-phosphate oxidase, found in Shewanella sp. (strain MR-7).